Consider the following 255-residue polypeptide: MMHVKHIALGSRLLPLSFACNPSEVVHVVGPNGSGKSTLLGAISGTLTQREGVSGQVLVDSNDLLTMPLSEQAHIRGYLCQQSRPTFNVDVFQYLALSLPTGANISDAKVRDAVNIVIELVQLQDKLHRSIQTLSGGEWQRVRLAGVCLQVWRTINPYSQLLILDEPAAPLDIAQEGLLYQLINAVAAQGIGVLVANHDLNRTLRYADKVLLLNNGVLHSLGHADEVLTEEGLAEVFQTQVRKVVLEDRPYLIFD.

Positions 2–240 (MHVKHIALGS…EGLAEVFQTQ (239 aa)) constitute an ABC transporter domain. Residue 30–37 (GPNGSGKS) participates in ATP binding.

Belongs to the ABC transporter superfamily. Vitamin B12 importer (TC 3.A.1.13.1) family. In terms of assembly, the complex is composed of two ATP-binding proteins (BtuD), two transmembrane proteins (BtuC) and a solute-binding protein (BtuF).

It is found in the cell inner membrane. The catalysed reaction is an R-cob(III)alamin(out) + ATP + H2O = an R-cob(III)alamin(in) + ADP + phosphate + H(+). Its function is as follows. Part of the ABC transporter complex BtuCDF involved in vitamin B12 import. Responsible for energy coupling to the transport system. This is Vitamin B12 import ATP-binding protein BtuD from Vibrio campbellii (strain ATCC BAA-1116).